Reading from the N-terminus, the 284-residue chain is Protoheme IX farnesyltransferase (284 aa).

The next 9 helical transmembrane spans lie at 13-33 (VTVLVLATVLPGMYLGTTGYP), 35-55 (LTVISITLFGTYLMSSASFIL), 84-104 (FALLLGIVVAIVSFGILTYFI), 106-126 (LLTAVCALAALLLYVFLYTIW), 134-154 (NIVIGGISGCIGPLIGYAAMA), 163-183 (VMFLMIFLWTPAHFWALAIFL), 205-225 (VNQIFLYAIAYSLSVIGFYFV), 229-249 (MGYLFLLSAIVLTVLILGFAY), and 264-284 (FFFSILHLFLVSIAIVIDSKI).

The protein belongs to the UbiA prenyltransferase family. Protoheme IX farnesyltransferase subfamily.

It is found in the cell inner membrane. The catalysed reaction is heme b + (2E,6E)-farnesyl diphosphate + H2O = Fe(II)-heme o + diphosphate. Its pathway is porphyrin-containing compound metabolism; heme O biosynthesis; heme O from protoheme: step 1/1. Its function is as follows. Converts heme B (protoheme IX) to heme O by substitution of the vinyl group on carbon 2 of heme B porphyrin ring with a hydroxyethyl farnesyl side group. This is Protoheme IX farnesyltransferase from Leptospira biflexa serovar Patoc (strain Patoc 1 / Ames).